The sequence spans 76 residues: Kappa-actitoxin-Avd4g (76 aa).

Positions 1–19 are cleaved as a signal peptide; sequence MNKALFLCLVVLCAAVVFA. The propeptide occupies 20–31; it reads AEDLQKAKHAPF. Intrachain disulfides connect C37-C72, C39-C65, and C55-C73.

The protein belongs to the sea anemone type 3 (BDS) potassium channel toxin family. In terms of tissue distribution, moderately expressed in the ectodermal tissue from the distal and proximal tentacles, body wall, and oral disk.

The protein localises to the secreted. It localises to the nematocyst. Blocks Kv3 voltage-gated potassium channels. Reduces blood pressure. The chain is Kappa-actitoxin-Avd4g from Anemonia viridis (Snakelocks anemone).